Here is a 502-residue protein sequence, read N- to C-terminus: Putative diacyglycerol O-acyltransferase MT1809 (502 aa).

The active-site Proton acceptor is His174.

It belongs to the long-chain O-acyltransferase family.

It carries out the reaction an acyl-CoA + a 1,2-diacyl-sn-glycerol = a triacyl-sn-glycerol + CoA. It participates in glycerolipid metabolism; triacylglycerol biosynthesis. The sequence is that of Putative diacyglycerol O-acyltransferase MT1809 from Mycobacterium tuberculosis (strain CDC 1551 / Oshkosh).